The chain runs to 100 residues: UPF0248 protein APE_0939 (100 aa).

This sequence belongs to the UPF0248 family.

The sequence is that of UPF0248 protein APE_0939 from Aeropyrum pernix (strain ATCC 700893 / DSM 11879 / JCM 9820 / NBRC 100138 / K1).